We begin with the raw amino-acid sequence, 428 residues long: Serine--tRNA ligase (428 aa).

231–233 (TAE) lines the L-serine pocket. Residue 262–264 (RAE) participates in ATP binding. Glu285 serves as a coordination point for L-serine. 349–352 (EISS) provides a ligand contact to ATP. An L-serine-binding site is contributed by Ser385.

The protein belongs to the class-II aminoacyl-tRNA synthetase family. Type-1 seryl-tRNA synthetase subfamily. In terms of assembly, homodimer. The tRNA molecule binds across the dimer.

It localises to the cytoplasm. The enzyme catalyses tRNA(Ser) + L-serine + ATP = L-seryl-tRNA(Ser) + AMP + diphosphate + H(+). The catalysed reaction is tRNA(Sec) + L-serine + ATP = L-seryl-tRNA(Sec) + AMP + diphosphate + H(+). The protein operates within aminoacyl-tRNA biosynthesis; selenocysteinyl-tRNA(Sec) biosynthesis; L-seryl-tRNA(Sec) from L-serine and tRNA(Sec): step 1/1. Functionally, catalyzes the attachment of serine to tRNA(Ser). Is also able to aminoacylate tRNA(Sec) with serine, to form the misacylated tRNA L-seryl-tRNA(Sec), which will be further converted into selenocysteinyl-tRNA(Sec). This chain is Serine--tRNA ligase, found in Methylorubrum extorquens (strain CM4 / NCIMB 13688) (Methylobacterium extorquens).